A 346-amino-acid chain; its full sequence is Selenide, water dikinase (346 aa).

Residue Cys-15 is part of the active site. Residues Lys-18 and 46 to 48 (SKD) each bind ATP. Residue Asp-49 coordinates Mg(2+). ATP contacts are provided by residues Asp-66, Asp-89, and 137-139 (GHS). Asp-89 contacts Mg(2+). Asp-225 is a binding site for Mg(2+).

This sequence belongs to the selenophosphate synthase 1 family. Class I subfamily. As to quaternary structure, homodimer. Mg(2+) serves as cofactor.

The enzyme catalyses hydrogenselenide + ATP + H2O = selenophosphate + AMP + phosphate + 2 H(+). Synthesizes selenophosphate from selenide and ATP. The sequence is that of Selenide, water dikinase from Photobacterium profundum (strain SS9).